A 465-amino-acid chain; its full sequence is Ubiquitin carboxyl-terminal hydrolase UCH54 (465 aa).

Residues 11–333 (EWCLIESNPC…VRFNIIAVMK (323 aa)) enclose the UCH catalytic domain. C145 acts as the Nucleophile in catalysis. Catalysis depends on H220, which acts as the Proton donor. The segment at 244–293 (INADEQNKPNPNNNNNNKDNDNDNNNNNNNNNNNNNNNNNNNNNNNNNNI) is disordered. Residues 251–292 (KPNPNNNNNNKDNDNDNNNNNNNNNNNNNNNNNNNNNNNNNN) are compositionally biased toward low complexity. The region spanning 432–460 (NFYPFIMSSLNLMAKHKLLKDAYQKEKLK) is the ULD domain.

This sequence belongs to the peptidase C12 family.

It carries out the reaction Thiol-dependent hydrolysis of ester, thioester, amide, peptide and isopeptide bonds formed by the C-terminal Gly of ubiquitin (a 76-residue protein attached to proteins as an intracellular targeting signal).. Its function is as follows. Thiol protease that recognizes and hydrolyzes a peptide bond at the C-terminal glycine of either ubiquitin or NEDD8. The sequence is that of Ubiquitin carboxyl-terminal hydrolase UCH54 from Plasmodium falciparum (isolate 3D7).